The sequence spans 103 residues: Ribonuclease VapC14 (103 aa).

The PINc domain occupies 3 to 74; sequence YVLDTNVVSA…WFDDKVLRIF (72 aa). Mg(2+) is bound at residue aspartate 6.

This sequence belongs to the PINc/VapC protein family. The cofactor is Mg(2+).

In terms of biological role, toxic component of a type II toxin-antitoxin (TA) system. An RNase. The cognate antitoxin is VapB14. The protein is Ribonuclease VapC14 (vapC14) of Mycobacterium tuberculosis (strain CDC 1551 / Oshkosh).